The following is a 120-amino-acid chain: UPF0295 protein Exig_0660 (120 aa).

A run of 2 helical transmembrane segments spans residues A16–F36 and V41–I61.

The protein belongs to the UPF0295 family.

It is found in the cell membrane. The polypeptide is UPF0295 protein Exig_0660 (Exiguobacterium sibiricum (strain DSM 17290 / CCUG 55495 / CIP 109462 / JCM 13490 / 255-15)).